The primary structure comprises 135 residues: Ribosome-binding factor A (135 aa).

The protein belongs to the RbfA family. As to quaternary structure, monomer. Binds 30S ribosomal subunits, but not 50S ribosomal subunits or 70S ribosomes.

It localises to the cytoplasm. One of several proteins that assist in the late maturation steps of the functional core of the 30S ribosomal subunit. Associates with free 30S ribosomal subunits (but not with 30S subunits that are part of 70S ribosomes or polysomes). Required for efficient processing of 16S rRNA. May interact with the 5'-terminal helix region of 16S rRNA. This chain is Ribosome-binding factor A, found in Bartonella henselae (strain ATCC 49882 / DSM 28221 / CCUG 30454 / Houston 1) (Rochalimaea henselae).